The chain runs to 238 residues: Neuromodulin (238 aa).

Residues 1–238 (MLCCMRRTKQ…EEPEADQEHA (238 aa)) form a disordered region. Residues Cys3 and Cys4 are each lipidated (S-palmitoyl cysteine). The segment covering 9 to 32 (KQVEKNDEDQKIEQDGIKPEDKAH) has biased composition (basic and acidic residues). Residues 31-60 (AHKAATKIQASFRGHITRKKLKGEKKDDAQ) form the IQ domain. Residue Ser41 is modified to Phosphoserine; by PHK and PKC. Residues 54–83 (EKKDDAQAAEAEANKKDEAPVADGVEKKGE) show a composition bias toward basic and acidic residues. The span at 84-95 (GTTATEAAPATG) shows a compositional bias: low complexity. The span at 97–116 (KPDEPGKAGETPSEEKKGEG) shows a compositional bias: basic and acidic residues. Low complexity predominate over residues 119 to 130 (ATEQAAPQAPAS). Polar residues predominate over residues 139–154 (ETESATKASTDNSPSS). Ser151, Ser153, and Ser154 each carry phosphoserine. A compositionally biased stretch (basic and acidic residues) spans 155–167 (KAEDAPAKEEPKQ). Residues 168–199 (ADVPAAVTAAAATTPAAEDAAAKATAQPPTET) are compositionally biased toward low complexity. Thr181 carries the post-translational modification Phosphothreonine. Phosphoserine; by CK2 is present on residues Ser202 and Ser203. Basic and acidic residues predominate over residues 213–225 (DETKPKESARQDE). The span at 226–238 (GKEEEPEADQEHA) shows a compositional bias: acidic residues.

It belongs to the neuromodulin family. Identified in a complex containing FGFR4, NCAM1, CDH2, PLCG1, FRS2, SRC, SHC1, GAP43 and CTTN. Interacts (via IQ domain) with calmodulin. Binds calmodulin with a greater affinity in the absence of Ca(2+) than in its presence. Post-translationally, phosphorylated. Phosphorylation of this protein by a protein kinase C is specifically correlated with certain forms of synaptic plasticity. Palmitoylated by ZDHHC3. Palmitoylation is regulated by ARF6 and is essential for plasma membrane association and axonal and dendritic filopodia induction. Deacylated by LYPLA2.

The protein resides in the cell membrane. The protein localises to the cell projection. Its subcellular location is the growth cone membrane. It is found in the synapse. It localises to the filopodium membrane. The protein resides in the perikaryon. The protein localises to the dendrite. Its subcellular location is the axon. It is found in the cytoplasm. Its function is as follows. This protein is associated with nerve growth. It is a major component of the motile 'growth cones' that form the tips of elongating axons. Plays a role in axonal and dendritic filopodia induction. The chain is Neuromodulin (GAP43) from Macaca fascicularis (Crab-eating macaque).